The following is a 197-amino-acid chain: Recombination protein RecR (197 aa).

A C4-type zinc finger spans residues 56-71; sequence CRLCNNFSEAEVCEVC. In terms of domain architecture, Toprim spans 79–174; sequence RQLAVVEMPA…KVSRLARGVP (96 aa).

The protein belongs to the RecR family.

Functionally, may play a role in DNA repair. It seems to be involved in an RecBC-independent recombinational process of DNA repair. It may act with RecF and RecO. The chain is Recombination protein RecR from Thiobacillus denitrificans (strain ATCC 25259 / T1).